A 2326-amino-acid polypeptide reads, in one-letter code: Telomere-associated protein RIF1 (2326 aa).

Disordered regions lie at residues 381–410, 1105–1965, and 1993–2050; these read QGTPSRVPSNPNSANPPQKPGPYPFASPAT, YTQS…CITP, and VENK…DDSL. Positions 382–396 are enriched in polar residues; the sequence is GTPSRVPSNPNSANP. 2 stretches are compositionally biased toward basic and acidic residues: residues 1112–1126 and 1150–1182; these read SLEKSPLENAKEDFK and CKVDNPLEDVKEKSAYHIEKNSNSEEESSRGDR. The span at 1216-1225 shows a compositional bias: low complexity; sequence SAISCSSTSS. 2 stretches are compositionally biased toward polar residues: residues 1233–1242 and 1252–1270; these read QPASRRQSFI and SRPFSPSALNSVSEVSQSA. Over residues 1290 to 1299 the composition is skewed to basic and acidic residues; it reads KSGEESRKSS. 2 stretches are compositionally biased toward polar residues: residues 1318 to 1332 and 1341 to 1353; these read MEQQGNQQAKLVTNS and SFVSNSVENSPES. The span at 1376–1402 shows a compositional bias: basic and acidic residues; sequence PDIKKAEAVMAEIEKVRAFEMDSKENT. Positions 1403–1412 are enriched in polar residues; that stretch reads PPKTAVSSEQ. Basic and acidic residues-rich tracts occupy residues 1448–1480, 1489–1511, and 1519–1539; these read QDKEDGYQKKDKRKEDEKALQKKVPQTKEDASQ, ASEHAIKKESSLPERSAAEDLGS, and GADEEANRSAGKPEDTLKSDS. Residues 1564 to 1573 show a composition bias toward polar residues; that stretch reads SSQGLLSSIE. The span at 1586–1595 shows a compositional bias: basic residues; the sequence is SLKKKSGKTK. Over residues 1596–1609 the composition is skewed to basic and acidic residues; sequence NKSDSLEGKRKDVQ. 2 stretches are compositionally biased toward polar residues: residues 1610–1640 and 1671–1683; these read PESQSHGVSSQVDESKNLSGMNESELSSEVS and RTSPSTQNVSVEQ. Over residues 1697 to 1712 the composition is skewed to basic and acidic residues; that stretch reads RVSDEVLKGDENKCIE. Residues 1713–1745 show a composition bias toward polar residues; sequence KQSSVEQHSSVQPENVQGANTSGSDLSSLQMQD. Positions 1776-1785 are enriched in basic and acidic residues; it reads SKSEDPRELI. Residues 1795–1813 show a composition bias toward polar residues; that stretch reads AVSTAEVSGSSNLEESLSI. 3 stretches are compositionally biased toward basic and acidic residues: residues 1869–1884, 1908–1925, and 1932–1954; these read VEIKVKEEVDGNDRAE, SEEKAAVEKEEESQHGEM, and DGSKPETKQMDELEGNRDGKEEA. Residues 2009–2036 show a composition bias toward polar residues; it reads SFTSVNGSPSGVQARCTWSPSASPSTSI.

The protein belongs to the RIF1 family. In terms of assembly, interacts with TP53BP1 (when phosphorylated by ATM).

Its subcellular location is the nucleus. It localises to the chromosome. The protein localises to the telomere. It is found in the cytoplasm. The protein resides in the cytoskeleton. Its subcellular location is the spindle. Key regulator of TP53BP1 that plays a key role in the repair of double-strand DNA breaks (DSBs) in response to DNA damage: acts by promoting non-homologous end joining (NHEJ)-mediated repair of DSBs. In response to DNA damage, interacts with ATM-phosphorylated TP53BP1, allowing recruitment to DNA DSBs. Once recruited to DSBs, RIF1 and TP53BP1 act by promoting NHEJ-mediated repair of DSBs. In the same time, RIF1 and TP53BP1 specifically counteract DSBs resection via homologous recombination (HR) during G1 phase. In Gallus gallus (Chicken), this protein is Telomere-associated protein RIF1.